Reading from the N-terminus, the 156-residue chain is Small ribosomal subunit protein uS7 (156 aa).

It belongs to the universal ribosomal protein uS7 family. As to quaternary structure, part of the 30S ribosomal subunit. Contacts proteins S9 and S11.

In terms of biological role, one of the primary rRNA binding proteins, it binds directly to 16S rRNA where it nucleates assembly of the head domain of the 30S subunit. Is located at the subunit interface close to the decoding center, probably blocks exit of the E-site tRNA. This is Small ribosomal subunit protein uS7 from Aliivibrio salmonicida (strain LFI1238) (Vibrio salmonicida (strain LFI1238)).